A 313-amino-acid chain; its full sequence is N(5)-(carboxyethyl)ornithine synthase (313 aa).

Positions 15, 71, and 92 each coordinate pyruvate. 171–176 (GSGNVA) is a binding site for NADP(+).

The protein belongs to the AlaDH/PNT family. CEOS subfamily. As to quaternary structure, homotetramer.

It catalyses the reaction N(5)-[1(S)-1-carboxyethyl]-L-ornithine + NADP(+) + H2O = L-ornithine + pyruvate + NADPH + H(+). With respect to regulation, is potently inhibited by the reaction product N(5)-(L-1-carboxyethyl)-L-ornithine. Functionally, catalyzes the NADPH-dependent reductive condensation between pyruvic acid and the side chain amino group of L-ornithine to form N(5)-(L-1-carboxyethyl)-L-ornithine. To a lesser extent, can also use L-lysine as substrate (yielding N(6)-(L-1-carboxyethyl)-L-lysine). NADH cannot replace NADPH in the condensation reaction. This Lactococcus lactis subsp. lactis (Streptococcus lactis) protein is N(5)-(carboxyethyl)ornithine synthase (ceo).